A 723-amino-acid polypeptide reads, in one-letter code: Calpastatin (723 aa).

2 disordered regions span residues 1-402 (MNPT…PGRC) and 422-509 (STHS…LPPL). Over residues 21 to 30 (PNKKRHKKQA) the composition is skewed to basic residues. Residue Lys-32 forms a Glycyl lysine isopeptide (Lys-Gly) (interchain with G-Cter in SUMO2) linkage. The segment covering 46 to 84 (VVHEKKTQEVKPKEHTEPKSQPKHPSDTRSKHAPKEKAV) has biased composition (basic and acidic residues). Position 50 is an N6-acetyllysine (Lys-50). Composition is skewed to low complexity over residues 85–94 (SKSSEQPPSE) and 113–125 (SAVPAVAAAASAE). Ser-87 carries the phosphoserine modification. Thr-137 is modified (phosphothreonine). Positions 157–173 (TALDDLIDTLGEPEETK) are enriched in acidic residues. Residues 171 to 224 (ETKEDTTTYTGPEVSDPMSSTYIEELGKREVTLPPKYRELLNKEEGIAGPPPDS) form an Inhibitory domain 1 repeat. Basic and acidic residues predominate over residues 195–216 (ELGKREVTLPPKYRELLNKEEG). Ser-224 and Ser-245 each carry phosphoserine. Basic and acidic residues-rich tracts occupy residues 249-263 (DAKKTEKEKSTEEAL) and 306-367 (PRPE…KPLS). The Inhibitory domain 2 repeat unit spans residues 307–359 (RPELDPSSIKEVDEAKAKEEKVKKCGEDEERVPSEYRLKPATDKDGKPLLPEA). Residues Ser-367, Ser-369, and Ser-376 each carry the phosphoserine modification. A compositionally biased stretch (basic and acidic residues) spans 378–396 (DFDRSKCKEKQSKPTEKNR). Ser-443 is subject to Phosphoserine. Basic and acidic residues predominate over residues 445–504 (GKKEADPEDGKPVEDKVKEKAKEEDREKLGEREETIPPDYRLEEAKDKDGKPLPPKEVKE). Residues 449-502 (ADPEDGKPVEDKVKEKAKEEDREKLGEREETIPPDYRLEEAKDKDGKPLPPKEV) form an Inhibitory domain 3 repeat. Residues Ser-519 and Ser-530 each carry the phosphoserine modification. Residues 547-723 (SQTPAPTTQA…KPKADGKSTS (177 aa)) are disordered. A compositionally biased stretch (low complexity) spans 548–560 (QTPAPTTQAAGPP). Over residues 562 to 571 (DSARDNKELD) the composition is skewed to basic and acidic residues. A phosphoserine mark is found at Ser-578 and Ser-580. Residues 586 to 642 (PDPDEHKPVEDKVKEKAKAEHRDKLGERDDTIPPKYQHLLDDNKEGTPGKPKRSESP) form an Inhibitory domain 4 repeat. The span at 586 to 643 (PDPDEHKPVEDKVKEKAKAEHRDKLGERDDTIPPKYQHLLDDNKEGTPGKPKRSESPR) shows a compositional bias: basic and acidic residues. The segment covering 653-670 (NLQVPRTPLTPSQGTWTA) has biased composition (polar residues). The span at 672–690 (PQLQKPQQTQQRTKTRSLL) shows a compositional bias: low complexity. Residues 701-723 (KAKDSTKAKEETSKPKADGKSTS) are compositionally biased toward basic and acidic residues.

The protein belongs to the protease inhibitor I27 (calpastatin) family.

In terms of biological role, specific inhibition of calpain (calcium-dependent cysteine protease). Plays a key role in postmortem tenderization of meat and have been proposed to be involved in muscle protein degradation in living tissue. This Ovis aries (Sheep) protein is Calpastatin (CAST).